We begin with the raw amino-acid sequence, 360 residues long: Photosystem II protein D1 (360 aa).

The next 3 membrane-spanning stretches (helical) occupy residues 29 to 46, 118 to 133, and 142 to 156; these read YIGWFGVLMIPTLLTATS, HFFIGICAYMGREWEL, and WIAVAFSAPVAAATA. Residue histidine 118 participates in chlorophyll a binding. Residue tyrosine 126 participates in pheophytin a binding. [CaMn4O5] cluster-binding residues include aspartate 170 and glutamate 189. Residues 197-218 traverse the membrane as a helical segment; that stretch reads FHMMGVAGVFGGSLFSAMHGSL. Histidine 198 serves as a coordination point for chlorophyll a. Residues histidine 215 and 264 to 265 contribute to the a quinone site; that span reads SF. Position 215 (histidine 215) interacts with Fe cation. Histidine 272 is a Fe cation binding site. A helical transmembrane segment spans residues 274-288; the sequence is FLALWPVVCICVTAL. [CaMn4O5] cluster contacts are provided by histidine 332, glutamate 333, aspartate 342, and alanine 344. Positions 345-360 are excised as a propeptide; the sequence is SEVSLPVALNKVEING.

This sequence belongs to the reaction center PufL/M/PsbA/D family. PSII is composed of 1 copy each of membrane proteins PsbA, PsbB, PsbC, PsbD, PsbE, PsbF, PsbH, PsbI, PsbJ, PsbK, PsbL, PsbM, PsbT, PsbY, PsbZ, Psb30/Ycf12, at least 3 peripheral proteins of the oxygen-evolving complex and a large number of cofactors. It forms dimeric complexes. The cofactor is The D1/D2 heterodimer binds P680, chlorophylls that are the primary electron donor of PSII, and subsequent electron acceptors. It shares a non-heme iron and each subunit binds pheophytin, quinone, additional chlorophylls, carotenoids and lipids. D1 provides most of the ligands for the Mn4-Ca-O5 cluster of the oxygen-evolving complex (OEC). There is also a Cl(-1) ion associated with D1 and D2, which is required for oxygen evolution. The PSII complex binds additional chlorophylls, carotenoids and specific lipids.. Tyr-161 forms a radical intermediate that is referred to as redox-active TyrZ, YZ or Y-Z. Post-translationally, C-terminally processed by CTPA; processing is essential to allow assembly of the oxygen-evolving complex and thus photosynthetic growth.

It localises to the plastid. Its subcellular location is the chloroplast thylakoid membrane. The enzyme catalyses 2 a plastoquinone + 4 hnu + 2 H2O = 2 a plastoquinol + O2. In terms of biological role, photosystem II (PSII) is a light-driven water:plastoquinone oxidoreductase that uses light energy to abstract electrons from H(2)O, generating O(2) and a proton gradient subsequently used for ATP formation. It consists of a core antenna complex that captures photons, and an electron transfer chain that converts photonic excitation into a charge separation. The D1/D2 (PsbA/PsbD) reaction center heterodimer binds P680, the primary electron donor of PSII as well as several subsequent electron acceptors. This is Photosystem II protein D1 from Galdieria sulphuraria (Red alga).